Here is a 360-residue protein sequence, read N- to C-terminus: Phospho-N-acetylmuramoyl-pentapeptide-transferase (360 aa).

10 consecutive transmembrane segments (helical) span residues Tyr21–Gly41, Thr71–Ala91, Ser94–Ile114, Leu142–Val162, Ile168–Ser188, Gly199–Thr219, Ala236–Phe256, Val263–Leu283, Phe288–Val308, and Val338–Lys358.

This sequence belongs to the glycosyltransferase 4 family. MraY subfamily. Mg(2+) serves as cofactor.

It is found in the cell inner membrane. It catalyses the reaction UDP-N-acetyl-alpha-D-muramoyl-L-alanyl-gamma-D-glutamyl-meso-2,6-diaminopimeloyl-D-alanyl-D-alanine + di-trans,octa-cis-undecaprenyl phosphate = di-trans,octa-cis-undecaprenyl diphospho-N-acetyl-alpha-D-muramoyl-L-alanyl-D-glutamyl-meso-2,6-diaminopimeloyl-D-alanyl-D-alanine + UMP. It participates in cell wall biogenesis; peptidoglycan biosynthesis. Catalyzes the initial step of the lipid cycle reactions in the biosynthesis of the cell wall peptidoglycan: transfers peptidoglycan precursor phospho-MurNAc-pentapeptide from UDP-MurNAc-pentapeptide onto the lipid carrier undecaprenyl phosphate, yielding undecaprenyl-pyrophosphoryl-MurNAc-pentapeptide, known as lipid I. The chain is Phospho-N-acetylmuramoyl-pentapeptide-transferase from Tolumonas auensis (strain DSM 9187 / NBRC 110442 / TA 4).